The primary structure comprises 323 residues: uncharacterized protein (323 aa).

This is an uncharacterized protein from Thermotoga maritima (strain ATCC 43589 / DSM 3109 / JCM 10099 / NBRC 100826 / MSB8).